The primary structure comprises 493 residues: High affinity nitrate transporter 2.7 (493 aa).

A compositionally biased stretch (polar residues) spans 1 to 19; it reads MEPSQRNTKPPSFSDSTIP. The interval 1–20 is disordered; that stretch reads MEPSQRNTKPPSFSDSTIPV. A run of 12 helical transmembrane segments spans residues 46 to 66, 70 to 90, 113 to 133, 136 to 156, 174 to 194, 202 to 222, 257 to 277, 299 to 319, 341 to 361, 368 to 388, 400 to 420, and 431 to 451; these read WLSL…VPVI, LNLS…GSIF, FLTA…SFIL, FFVG…SSMF, VGAG…AEFL, VSFV…LLYG, FVEI…ALLY, FGVN…SNIA, LWGL…LGRV, ILVM…VFGV, VAGI…FLLF, and ISLM…IYFP.

Belongs to the major facilitator superfamily. Nitrate/nitrite porter (TC 2.A.1.8) family. As to expression, expressed in seeds, leaves and shoots. Lower expression in roots.

The protein localises to the vacuole membrane. Functionally, involved in high-affinity nitrate transport. Controls nitrate content in seeds. The protein is High affinity nitrate transporter 2.7 (NRT2.7) of Arabidopsis thaliana (Mouse-ear cress).